The primary structure comprises 68 residues: uncharacterized protein (68 aa).

This is an uncharacterized protein from Caenorhabditis elegans.